Here is a 92-residue protein sequence, read N- to C-terminus: Small ribosomal subunit protein uS19c (92 aa).

It belongs to the universal ribosomal protein uS19 family.

It localises to the plastid. The protein resides in the chloroplast. Protein S19 forms a complex with S13 that binds strongly to the 16S ribosomal RNA. The protein is Small ribosomal subunit protein uS19c of Nicotiana sylvestris (Wood tobacco).